Consider the following 181-residue polypeptide: Protein GrpE (181 aa).

The segment covering 1-24 (MSEENIGENEVETPETEPSAEAEV) has biased composition (acidic residues). The interval 1–26 (MSEENIGENEVETPETEPSAEAEVES) is disordered.

Belongs to the GrpE family. In terms of assembly, homodimer.

Its subcellular location is the cytoplasm. Its function is as follows. Participates actively in the response to hyperosmotic and heat shock by preventing the aggregation of stress-denatured proteins, in association with DnaK and GrpE. It is the nucleotide exchange factor for DnaK and may function as a thermosensor. Unfolded proteins bind initially to DnaJ; upon interaction with the DnaJ-bound protein, DnaK hydrolyzes its bound ATP, resulting in the formation of a stable complex. GrpE releases ADP from DnaK; ATP binding to DnaK triggers the release of the substrate protein, thus completing the reaction cycle. Several rounds of ATP-dependent interactions between DnaJ, DnaK and GrpE are required for fully efficient folding. This Rhizorhabdus wittichii (strain DSM 6014 / CCUG 31198 / JCM 15750 / NBRC 105917 / EY 4224 / RW1) (Sphingomonas wittichii) protein is Protein GrpE.